A 65-amino-acid polypeptide reads, in one-letter code: MPKIKTHRGAAKRFSKTGTGKIKRSHAFTSHILTSKTRKNKRNLRKGAIVEAVDHKNIAKLIPYM.

The span at 1-26 (MPKIKTHRGAAKRFSKTGTGKIKRSH) shows a compositional bias: basic residues. The disordered stretch occupies residues 1–41 (MPKIKTHRGAAKRFSKTGTGKIKRSHAFTSHILTSKTRKNK).

This sequence belongs to the bacterial ribosomal protein bL35 family.

The protein is Large ribosomal subunit protein bL35 of Geotalea daltonii (strain DSM 22248 / JCM 15807 / FRC-32) (Geobacter daltonii).